The following is a 158-amino-acid chain: Peptide deformylase (158 aa).

The Fe cation site is built by cysteine 88 and histidine 130. Glutamate 131 is a catalytic residue. Histidine 134 serves as a coordination point for Fe cation.

It belongs to the polypeptide deformylase family. Fe(2+) serves as cofactor.

It catalyses the reaction N-terminal N-formyl-L-methionyl-[peptide] + H2O = N-terminal L-methionyl-[peptide] + formate. Its function is as follows. Removes the formyl group from the N-terminal Met of newly synthesized proteins. Requires at least a dipeptide for an efficient rate of reaction. N-terminal L-methionine is a prerequisite for activity but the enzyme has broad specificity at other positions. This chain is Peptide deformylase, found in Agathobacter rectalis (strain ATCC 33656 / DSM 3377 / JCM 17463 / KCTC 5835 / VPI 0990) (Eubacterium rectale).